A 495-amino-acid chain; its full sequence is Acetyl-coenzyme A carboxylase carboxyl transferase subunit beta, chloroplastic (495 aa).

The segment at 188–208 (SRNSSENEGSSRRTRTKGSDL) is disordered. A CoA carboxyltransferase N-terminal domain is found at 226–495 (LWVQCENCYG…PLNQKSSKIK (270 aa)). Zn(2+)-binding residues include Cys-230, Cys-233, Cys-249, and Cys-252. Residues 230–252 (CENCYGLNYKKFFKSKMNICEQC) form a C4-type zinc finger.

It belongs to the AccD/PCCB family. As to quaternary structure, acetyl-CoA carboxylase is a heterohexamer composed of biotin carboxyl carrier protein, biotin carboxylase and 2 subunits each of ACCase subunit alpha and ACCase plastid-coded subunit beta (accD). Requires Zn(2+) as cofactor.

Its subcellular location is the plastid. The protein resides in the chloroplast stroma. The catalysed reaction is N(6)-carboxybiotinyl-L-lysyl-[protein] + acetyl-CoA = N(6)-biotinyl-L-lysyl-[protein] + malonyl-CoA. Its pathway is lipid metabolism; malonyl-CoA biosynthesis; malonyl-CoA from acetyl-CoA: step 1/1. Its function is as follows. Component of the acetyl coenzyme A carboxylase (ACC) complex. Biotin carboxylase (BC) catalyzes the carboxylation of biotin on its carrier protein (BCCP) and then the CO(2) group is transferred by the transcarboxylase to acetyl-CoA to form malonyl-CoA. This chain is Acetyl-coenzyme A carboxylase carboxyl transferase subunit beta, chloroplastic, found in Nicotiana tomentosiformis (Tobacco).